Reading from the N-terminus, the 354-residue chain is Methylthioribose-1-phosphate isomerase (354 aa).

Substrate-binding positions include 58–60, arginine 101, and glutamine 204; that span reads RGA. The Proton donor role is filled by aspartate 245. Residue 255–256 participates in substrate binding; sequence NK.

It belongs to the eIF-2B alpha/beta/delta subunits family. MtnA subfamily.

The enzyme catalyses 5-(methylsulfanyl)-alpha-D-ribose 1-phosphate = 5-(methylsulfanyl)-D-ribulose 1-phosphate. It functions in the pathway amino-acid biosynthesis; L-methionine biosynthesis via salvage pathway; L-methionine from S-methyl-5-thio-alpha-D-ribose 1-phosphate: step 1/6. Catalyzes the interconversion of methylthioribose-1-phosphate (MTR-1-P) into methylthioribulose-1-phosphate (MTRu-1-P). The polypeptide is Methylthioribose-1-phosphate isomerase (Xanthomonas campestris pv. campestris (strain ATCC 33913 / DSM 3586 / NCPPB 528 / LMG 568 / P 25)).